A 265-amino-acid chain; its full sequence is NAD kinase (265 aa).

Asp-45 functions as the Proton acceptor in the catalytic mechanism. Residues Asp-45–Gly-46, Asn-121–Glu-122, Arg-147, Asp-149, Thr-160–Ser-165, Ala-184, and Gln-222 each bind NAD(+).

This sequence belongs to the NAD kinase family. A divalent metal cation is required as a cofactor.

The protein resides in the cytoplasm. The catalysed reaction is NAD(+) + ATP = ADP + NADP(+) + H(+). Its function is as follows. Involved in the regulation of the intracellular balance of NAD and NADP, and is a key enzyme in the biosynthesis of NADP. Catalyzes specifically the phosphorylation on 2'-hydroxyl of the adenosine moiety of NAD to yield NADP. This Lacticaseibacillus paracasei (strain ATCC 334 / BCRC 17002 / CCUG 31169 / CIP 107868 / KCTC 3260 / NRRL B-441) (Lactobacillus paracasei) protein is NAD kinase.